Consider the following 110-residue polypeptide: Small ribosomal subunit protein uS10 (110 aa).

The protein belongs to the universal ribosomal protein uS10 family. As to quaternary structure, part of the 30S ribosomal subunit.

Involved in the binding of tRNA to the ribosomes. In Coxiella burnetii (strain Dugway 5J108-111), this protein is Small ribosomal subunit protein uS10.